The primary structure comprises 120 residues: Large ribosomal subunit protein uL18 (120 aa).

This sequence belongs to the universal ribosomal protein uL18 family. Part of the 50S ribosomal subunit; part of the 5S rRNA/L5/L18/L25 subcomplex. Contacts the 5S and 23S rRNAs.

In terms of biological role, this is one of the proteins that bind and probably mediate the attachment of the 5S RNA into the large ribosomal subunit, where it forms part of the central protuberance. This Methylocella silvestris (strain DSM 15510 / CIP 108128 / LMG 27833 / NCIMB 13906 / BL2) protein is Large ribosomal subunit protein uL18.